A 540-amino-acid polypeptide reads, in one-letter code: FAD-binding monooxygenase lolF1 (540 aa).

FAD is bound by residues 43–46 (VWRE) and 55–58 (DSLF). NADP(+) contacts are provided by residues 53–55 (AVD), 182–188 (TGPSGVQ), and 205–206 (QS).

This sequence belongs to the FAD-binding monooxygenase family. Requires FAD as cofactor.

It functions in the pathway alkaloid biosynthesis. In terms of biological role, FAD-binding monooxygenase; part of the gene cluster that mediates the biosynthesis of loline alkaloids, potent insecticidal agents composed of a pyrrolizidine ring system and an uncommon ether bridge linking carbons 2 and 7. Lolines are structurally differentiated by the various modifications of the L-amino group and include norloline, loline, N-methylloline, N-acetylloline, N-acetylnorloline, and N-formylloline. The first committed step is the condensation of O-acetyl-L-homoserine (derived from L-aspartic acid) and L-proline, probably catalyzed by the gamma-type pyridoxal 5'-phosphate(PLP)-dependent enzyme lolC, to give the diamino diacid, NACPP. Ensuing cyclization, decarboxylation, and acetylation steps yield 1-exo-acetamidopyrrolizidine (AcAP). LolO is required for installation of the ether bridge upon the pathway intermediate, 1-exo-acetamidopyrrolizidine (AcAP). In sequential 2-oxoglutarate- and O(2)-consuming steps, lolO removes hydrogens from C2 and C7 of AcAP to form both carbon-oxygen bonds in N-acetylnorloline (NANL), the precursor to all other lolines. The enzymes lolD, lolE, lolF and lolT have also been proposed to be involved in the ether-bridge installation. Further processing of the exocyclic moiety of NANL by fungal N-acetamidase (LolN), methyltransferase (LolM), and cytochrome P450 (LolP) enzymes, with occasional involvement of a plant acetyltransferase, generates the other known lolines. LolN transforms NANL to norlonine which is monomethylated and dimethylated to respectively lonine and N-methyllonine (NML) by lolM. LolP catalyzes hydroxylation of the methyl group in N-methylloline (NML) and further oxygenation to N-formylloline (NFL). A plant acetyltransferase is responsible for the acetylation of loline to form N-acetylloline (NAL). LolA might interact with aspartate kinase to prevent feedback inhibition of its activity by these end products and thereby promote production of L-homoserine from L-aspartate. This Epichloe uncinata (Endophyte fungus) protein is FAD-binding monooxygenase lolF1.